A 251-amino-acid chain; its full sequence is Phosphate import ATP-binding protein PstB 2 (251 aa).

The ABC transporter domain maps to 6–246 (FNIENLDLFY…PRDDRTRGYV (241 aa)). An ATP-binding site is contributed by 38-45 (GPSGCGKS).

It belongs to the ABC transporter superfamily. Phosphate importer (TC 3.A.1.7) family. The complex is composed of two ATP-binding proteins (PstB), two transmembrane proteins (PstC and PstA) and a solute-binding protein (PstS).

It localises to the cell inner membrane. The enzyme catalyses phosphate(out) + ATP + H2O = ADP + 2 phosphate(in) + H(+). Part of the ABC transporter complex PstSACB involved in phosphate import. Responsible for energy coupling to the transport system. In Vibrio cholerae serotype O1 (strain ATCC 39315 / El Tor Inaba N16961), this protein is Phosphate import ATP-binding protein PstB 2.